The chain runs to 596 residues: MKQIRNFSIIAHIDHGKSTLSDRLIQVCGGLTDREMDAQVLDSMDLERERGITIKAQSVTLDYKAKDGLVYQLNFIDTPGHVDFSYEVSRSLAACEGALLVVDAGQGVEAQTLANCYTALDMNLDVVPILNKIDLPQADPERVAAEIEDIVGIDAMDAVRCSAKTGVGVDEVLEVIVAKIPPPEGDPNAPLQALIIDSWFDNYLGVVSLVRIKHGSLKKGDKFKVMSTGQNHTADRVGIFTPKQTDKTELKTGEVGFVIAGLKEIHGAPVGDTLTLAKNGAEKPLPGFKKVKPQVYAGVFPISTDEYENFRDALNKLSLNDASLFFEPESSSALGFGFRIGYLGLLHMEIVQERLEREYNLELITTAPTVVYEVVMTSGETIYVDNPSDLPAINNIEEMREPIVEANILVPKEYLGNVITLCIEKRGTQVNMVYHGNQVAVTYHLPMAEVVMDFFDRLKSTSRGYASLEYNFIRFDPADMVRLDILINGDRVDALAMVIHRSNIRHRGLALVDKMKELIPRQMFDIAIQAAVGSQIIARSTVKALRKDVTAKCYGGDVSRKKKLLNKQKEGKKRMKQVGNVEVPQEAFLAVLKLNE.

The region spanning 2–184 (KQIRNFSIIA…VIVAKIPPPE (183 aa)) is the tr-type G domain. GTP contacts are provided by residues 14-19 (DHGKST) and 131-134 (NKID).

It belongs to the TRAFAC class translation factor GTPase superfamily. Classic translation factor GTPase family. LepA subfamily.

It localises to the cell inner membrane. It carries out the reaction GTP + H2O = GDP + phosphate + H(+). In terms of biological role, required for accurate and efficient protein synthesis under certain stress conditions. May act as a fidelity factor of the translation reaction, by catalyzing a one-codon backward translocation of tRNAs on improperly translocated ribosomes. Back-translocation proceeds from a post-translocation (POST) complex to a pre-translocation (PRE) complex, thus giving elongation factor G a second chance to translocate the tRNAs correctly. Binds to ribosomes in a GTP-dependent manner. The polypeptide is Elongation factor 4 (Shewanella baltica (strain OS155 / ATCC BAA-1091)).